The chain runs to 659 residues: Exoribonuclease 2 (659 aa).

The RNB domain maps to Arg-189–Ala-531. In terms of domain architecture, S1 motif spans Asn-576–Leu-658.

This sequence belongs to the RNR ribonuclease family. RNase II subfamily.

The protein localises to the cytoplasm. The catalysed reaction is Exonucleolytic cleavage in the 3'- to 5'-direction to yield nucleoside 5'-phosphates.. In terms of biological role, involved in mRNA degradation. Hydrolyzes single-stranded polyribonucleotides processively in the 3' to 5' direction. This chain is Exoribonuclease 2, found in Haemophilus influenzae (strain PittGG).